Here is a 445-residue protein sequence, read N- to C-terminus: Phosphoglucosamine mutase (445 aa).

S102 (phosphoserine intermediate) is an active-site residue. Mg(2+) is bound by residues S102, D240, D242, and D244. A Phosphoserine modification is found at S102.

The protein belongs to the phosphohexose mutase family. Mg(2+) serves as cofactor. In terms of processing, activated by phosphorylation.

The catalysed reaction is alpha-D-glucosamine 1-phosphate = D-glucosamine 6-phosphate. Catalyzes the conversion of glucosamine-6-phosphate to glucosamine-1-phosphate. This Mycolicibacterium gilvum (strain PYR-GCK) (Mycobacterium gilvum (strain PYR-GCK)) protein is Phosphoglucosamine mutase.